The following is a 504-amino-acid chain: Kinesin light chain 3 (504 aa).

The stretch at 90–150 forms a coiled coil; the sequence is ALSAHVGALE…EEEKRHLEFL (61 aa). The segment at 153-197 is disordered; it reads LRQYDPPAESQQSESPPRRDSLASLFPSEEEERKGPEAAGAAAAQ. The segment covering 158 to 167 has biased composition (low complexity); sequence PPAESQQSES. Ser173 carries the phosphoserine modification. TPR repeat units follow at residues 207–240, 249–282, 291–324, 333–366, and 375–408; these read LRTLHNLVIQYAGQGRYEVAVPLCRQALEDLERS, ATMLNILALVYRDQNKYKEATDLLHDALQIREQT, AATLNNLAVLYGKRGRYREAEPLCQRALEIREKV, AKQLNNLALLCQNQGKFEDVERHYARALSIYEAL, and AKTKNNLASAYLKQNKYQQAEELYKEILHKEDLP. The interval 411–438 is disordered; sequence LGAPNTGTAGDAEQALRRSSSLSKIRES. Phosphoserine is present on Ser466. Phosphothreonine is present on Thr498. Phosphoserine is present on Ser502.

The protein belongs to the kinesin light chain family. As to quaternary structure, oligomer composed of two heavy chains and two light chains. Associates with microtubulin in an ATP-dependent manner. Interacts with KIF5C. Interacts with ODF1. Interacts with LRGUK. Interacts with VDAC2.

It localises to the cytoplasm. The protein localises to the cytoskeleton. Its subcellular location is the mitochondrion. In terms of biological role, kinesin is a microtubule-associated force-producing protein that may play a role in organelle transport. Plays a role during spermiogenesis in the development of the sperm tail midpiece and in the normal function of spermatozoa. May play a role in the formation of the mitochondrial sheath formation in the developing spermatid midpiece. This Pongo abelii (Sumatran orangutan) protein is Kinesin light chain 3 (KLC3).